The sequence spans 587 residues: Proteasome-associated ATPase (587 aa).

A coiled-coil region spans residues 1–94 (MAARDDAEAR…KEEVDRLAQP (94 aa)). 276–281 (GCGKTL) serves as a coordination point for ATP. The segment at 586–587 (YL) is docks into pockets in the proteasome alpha-ring.

Belongs to the AAA ATPase family. As to quaternary structure, homohexamer. Assembles into a hexameric ring structure that caps the 20S proteasome core. Strongly interacts with the prokaryotic ubiquitin-like protein Pup through a hydrophobic interface; the interacting region of ARC lies in its N-terminal coiled-coil domain. There is one Pup binding site per ARC hexamer ring. Upon ATP-binding, the C-terminus of ARC interacts with the alpha-rings of the proteasome core, possibly by binding to the intersubunit pockets.

The protein operates within protein degradation; proteasomal Pup-dependent pathway. Functionally, ATPase which is responsible for recognizing, binding, unfolding and translocation of pupylated proteins into the bacterial 20S proteasome core particle. May be essential for opening the gate of the 20S proteasome via an interaction with its C-terminus, thereby allowing substrate entry and access to the site of proteolysis. Thus, the C-termini of the proteasomal ATPase may function like a 'key in a lock' to induce gate opening and therefore regulate proteolysis. The chain is Proteasome-associated ATPase from Streptosporangium roseum (strain ATCC 12428 / DSM 43021 / JCM 3005 / KCTC 9067 / NCIMB 10171 / NRRL 2505 / NI 9100).